A 204-amino-acid chain; its full sequence is Demethylsterigmatocystin 6-O-methyltransferase stcP (204 aa).

S-adenosyl-L-methionine is bound by residues 48 to 49, aspartate 73, 93 to 94, and arginine 109; these read GG and DF. The active-site Proton acceptor is the histidine 113.

The protein belongs to the class I-like SAM-binding methyltransferase superfamily. Cation-independent O-methyltransferase family.

It carries out the reaction 6-demethylsterigmatocystin + S-adenosyl-L-methionine = sterigmatocystin + S-adenosyl-L-homocysteine + H(+). It participates in mycotoxin biosynthesis; sterigmatocystin biosynthesis. Functionally, norsolorinic acid reductase; part of the gene cluster that mediates the biosynthesis of sterigmatocystin (ST), a polyketide-derived furanocoumarin which is part of the most toxic and carcinogenic compounds among the known mycotoxins. The first step in the biosynthesis of sterigmatocystin is the production of hexanoate by the fatty acid synthase (FAS) units stcJ and stcK. The polyketide backbone is assembled by the non-reducing polyketide synthase stcA by condensation of the starter hexanoyl-CoA and 7 malonyl-CoA extender units followed by cyclization and release of norsolorinic acid. Norsolorinic acid is the first stable intermediate in the biosynthesis of sterigmatocystin and is converted into averantin (AVN) by the ketoreductase stcE which reduces the hexanoate ketone to an alcohol. Averantin is then oxidized into 5'-hydroxyaverantin (HAVN) by the cytochrome P450 monooxygenase stcF. 5'-hydroxyaverantin is further converted to 5'-oxyaverantin (OAVN) by the 5'-hydroxyaverantin dehydrogenase stcG. The next step is the conversion of OAVN into averufin (AVF) which is catalyzed by a yet to be identified enzyme. The cytochrome P450 monooxygenase stcB and the flavin-binding monooxygenase stcW are both required for the conversion of averufin to 1-hydroxyversicolorone. The esterase stcI probably catalyzes the formation of versiconal hemiacetal acetate from 1-hydroxyversicolorone. The oxydoreductase stcN then probably catalyzes the biosynthetic step from versiconal to versicolorin B (VERB). The next step is performed by the versicolorin B desaturase stcL to produce versicolorin A (VERA). The ketoreductase stcU and the cytochrome P450 monooxygenase stcS are involved in the conversion of versicolorin A to demethylsterigmatocystin. The Baeyer-Villiger oxidas stcQ and the reductase stcR might be involved in the biosynthetic step from versicolorin A to demethylsterigmatocystin. The final step in the biosynthesis of sterigmatocystin is the methylation of demethylsterigmatocystin catalyzed by the methyltransferase stcP. The chain is Demethylsterigmatocystin 6-O-methyltransferase stcP from Emericella nidulans (strain FGSC A4 / ATCC 38163 / CBS 112.46 / NRRL 194 / M139) (Aspergillus nidulans).